The sequence spans 431 residues: Helix-loop-helix protein 11 (431 aa).

The segment at 88 to 109 (LANRSLSQPAPLSPTSLDPDRR) is disordered. Polar residues predominate over residues 91-103 (RSLSQPAPLSPTS). In terms of domain architecture, bHLH spans 112–163 (MRRQIANCNERRRMQSINAGFLALRALLPRKEGEKLSKAAILQQTADMVHQL). Polar residues-rich tracts occupy residues 226–241 (TTTS…PRSN) and 248–257 (LPSSYASSAL). The segment at 226–311 (TTTSSQASSP…PPPTLPSLET (86 aa)) is disordered. Residues 274 to 291 (TTSTPLSLLTLNGSPTSS) show a composition bias toward low complexity.

As to expression, expressed in the pharynx, nerve cords, the H-shaped excretory cell, vulva muscles, and the anal depressor (at protein level). Expressed in the intestine (at protein level). In males, it is also expressed in the spicules and hyp7 cells of the hypodermis (at protein level).

It localises to the nucleus. Its function is as follows. Transcriptional regulator. Component of a feedback loop involving atfs-1, atgl-1 and hlh-11. Binds to the promoter of the atgl-1 lipase to negatively regulate the expression of atgl-1, and thereby promoting fat oxidation in response to mitochondrial stress and mitochondrial respiration in the intestine. In addition, functions with atfs-1 to maintain lifespan. May have a role in fertility and in positively regulating body size. This Caenorhabditis elegans protein is Helix-loop-helix protein 11.